The chain runs to 284 residues: Bifunctional protein FolD 1 (284 aa).

Residues 164–166 (GRS), Ser189, and Ile230 contribute to the NADP(+) site.

It belongs to the tetrahydrofolate dehydrogenase/cyclohydrolase family. In terms of assembly, homodimer.

The catalysed reaction is (6R)-5,10-methylene-5,6,7,8-tetrahydrofolate + NADP(+) = (6R)-5,10-methenyltetrahydrofolate + NADPH. The enzyme catalyses (6R)-5,10-methenyltetrahydrofolate + H2O = (6R)-10-formyltetrahydrofolate + H(+). Its pathway is one-carbon metabolism; tetrahydrofolate interconversion. In terms of biological role, catalyzes the oxidation of 5,10-methylenetetrahydrofolate to 5,10-methenyltetrahydrofolate and then the hydrolysis of 5,10-methenyltetrahydrofolate to 10-formyltetrahydrofolate. The protein is Bifunctional protein FolD 1 of Rubrobacter xylanophilus (strain DSM 9941 / JCM 11954 / NBRC 16129 / PRD-1).